A 341-amino-acid polypeptide reads, in one-letter code: ATPase GET3 (341 aa).

34–41 (KGGVGKTT) serves as a coordination point for ATP. Asp63 is an active-site residue. Glu245 and Asn272 together coordinate ATP. Zn(2+)-binding residues include Cys283 and Cys286.

This sequence belongs to the arsA ATPase family. In terms of assembly, homodimer.

The protein resides in the cytoplasm. It is found in the endoplasmic reticulum. In terms of biological role, ATPase required for the post-translational delivery of tail-anchored (TA) proteins to the endoplasmic reticulum. Recognizes and selectively binds the transmembrane domain of TA proteins in the cytosol. This complex then targets to the endoplasmic reticulum by membrane-bound receptors, where the tail-anchored protein is released for insertion. This process is regulated by ATP binding and hydrolysis. ATP binding drives the homodimer towards the closed dimer state, facilitating recognition of newly synthesized TA membrane proteins. ATP hydrolysis is required for insertion. Subsequently, the homodimer reverts towards the open dimer state, lowering its affinity for the membrane-bound receptor, and returning it to the cytosol to initiate a new round of targeting. The sequence is that of ATPase GET3 from Ajellomyces capsulatus (strain G186AR / H82 / ATCC MYA-2454 / RMSCC 2432) (Darling's disease fungus).